The chain runs to 343 residues: Aspartate carbamoyltransferase catalytic subunit (343 aa).

The carbamoyl phosphate site is built by arginine 91 and threonine 92. Residue lysine 119 coordinates L-aspartate. Carbamoyl phosphate is bound by residues arginine 141, histidine 171, and glutamine 174. Arginine 204 and arginine 259 together coordinate L-aspartate. Carbamoyl phosphate contacts are provided by glycine 300 and proline 301.

The protein belongs to the aspartate/ornithine carbamoyltransferase superfamily. ATCase family. As to quaternary structure, heterododecamer (2C3:3R2) of six catalytic PyrB chains organized as two trimers (C3), and six regulatory PyrI chains organized as three dimers (R2).

The enzyme catalyses carbamoyl phosphate + L-aspartate = N-carbamoyl-L-aspartate + phosphate + H(+). The protein operates within pyrimidine metabolism; UMP biosynthesis via de novo pathway; (S)-dihydroorotate from bicarbonate: step 2/3. Catalyzes the condensation of carbamoyl phosphate and aspartate to form carbamoyl aspartate and inorganic phosphate, the committed step in the de novo pyrimidine nucleotide biosynthesis pathway. This Burkholderia orbicola (strain MC0-3) protein is Aspartate carbamoyltransferase catalytic subunit.